A 1755-amino-acid chain; its full sequence is Transposon Ty1-PL Gag-Pol polyprotein (1755 aa).

3 stretches are compositionally biased toward polar residues: residues 1–23 (MESQ…SVTS), 48–60 (TKAN…TPAS), and 127–152 (QSQF…GNTF). 3 disordered regions span residues 1–93 (MESQ…MMTQ), 126–174 (PQSQ…PPPM), and 352–421 (GSRN…SKST). A compositionally biased stretch (low complexity) spans 153 to 165 (TDSSSADSDMTST). The RNA-binding stretch occupies residues 299–401 (NNGIHINNKV…NSKSKTARAH (103 aa)). Residues 402 to 418 (NVSTSNNSPSTDNDSIS) show a composition bias toward low complexity. The residue at position 416 (serine 416) is a Phosphoserine. The active-site For protease activity; shared with dimeric partner is the aspartate 461. The segment at 583-640 (NVHTSESTRKYPYPFIHRMLAHANAQTIRYSLKNNTITYFNESDVDWSSAIDYQCPDC) is integrase-type zinc finger-like. The Integrase catalytic domain occupies 660–835 (NSYEPFQYLH…AGLDISTLLP (176 aa)). Mg(2+) contacts are provided by aspartate 671 and aspartate 736. Disordered regions lie at residues 956-1087 (SKAV…ETEK), 1092-1111 (RSPS…NIVP), and 1130-1187 (DLPL…DNET). Low complexity predominate over residues 960–969 (SPTDSTPPST). The span at 1005–1015 (STPQISNIEST) shows a compositional bias: polar residues. Positions 1038-1053 (ESSHASKSKDFRHSDS) are enriched in basic and acidic residues. Composition is skewed to polar residues over residues 1054–1082 (YSEN…QISD) and 1101–1111 (PENNSSHNIVP). Residues 1178-1212 (KKRSLEDNETEIKVSRDTWNTKNMRSLEPPRSKKR) carry the Bipartite nuclear localization signal motif. Residues 1338–1476 (NNYYITQLDI…DILGLEIKYQ (139 aa)) enclose the Reverse transcriptase Ty1/copia-type domain. The Mg(2+) site is built by aspartate 1346, aspartate 1427, aspartate 1428, aspartate 1610, glutamate 1652, and aspartate 1685. An RNase H Ty1/copia-type domain is found at 1610–1752 (DASYGNQPYY…IKTFKLLTNK (143 aa)).

The capsid protein forms a homotrimer, from which the VLPs are assembled. The protease is a homodimer, whose active site consists of two apposed aspartic acid residues. Initially, virus-like particles (VLPs) are composed of the structural unprocessed proteins Gag and Gag-Pol, and also contain the host initiator methionine tRNA (tRNA(i)-Met) which serves as a primer for minus-strand DNA synthesis, and a dimer of genomic Ty RNA. Processing of the polyproteins occurs within the particle and proceeds by an ordered pathway, called maturation. First, the protease (PR) is released by autocatalytic cleavage of the Gag-Pol polyprotein yielding capsid protein p45 and a Pol-p154 precursor protein. This cleavage is a prerequisite for subsequent processing of Pol-p154 at the remaining sites to release the mature structural and catalytic proteins. Maturation takes place prior to the RT reaction and is required to produce transposition-competent VLPs.

Its subcellular location is the cytoplasm. It localises to the nucleus. It catalyses the reaction DNA(n) + a 2'-deoxyribonucleoside 5'-triphosphate = DNA(n+1) + diphosphate. It carries out the reaction Endonucleolytic cleavage to 5'-phosphomonoester.. In terms of biological role, capsid protein (CA) is the structural component of the virus-like particle (VLP), forming the shell that encapsulates the retrotransposons dimeric RNA genome. The particles are assembled from trimer-clustered units and there are holes in the capsid shells that allow for the diffusion of macromolecules. CA also has nucleocapsid-like chaperone activity, promoting primer tRNA(i)-Met annealing to the multipartite primer-binding site (PBS), dimerization of Ty1 RNA and initiation of reverse transcription. Its function is as follows. The aspartyl protease (PR) mediates the proteolytic cleavages of the Gag and Gag-Pol polyproteins after assembly of the VLP. Functionally, reverse transcriptase/ribonuclease H (RT) is a multifunctional enzyme that catalyzes the conversion of the retro-elements RNA genome into dsDNA within the VLP. The enzyme displays a DNA polymerase activity that can copy either DNA or RNA templates, and a ribonuclease H (RNase H) activity that cleaves the RNA strand of RNA-DNA heteroduplexes during plus-strand synthesis and hydrolyzes RNA primers. The conversion leads to a linear dsDNA copy of the retrotransposon that includes long terminal repeats (LTRs) at both ends. Integrase (IN) targets the VLP to the nucleus, where a subparticle preintegration complex (PIC) containing at least integrase and the newly synthesized dsDNA copy of the retrotransposon must transit the nuclear membrane. Once in the nucleus, integrase performs the integration of the dsDNA into the host genome. The sequence is that of Transposon Ty1-PL Gag-Pol polyprotein (TY1B-PL) from Saccharomyces cerevisiae (strain ATCC 204508 / S288c) (Baker's yeast).